The sequence spans 445 residues: Xylose isomerase (445 aa).

Active-site residues include histidine 99 and aspartate 102. Mg(2+) is bound by residues glutamate 230, glutamate 266, histidine 269, aspartate 294, aspartate 305, aspartate 307, and aspartate 337.

This sequence belongs to the xylose isomerase family. In terms of assembly, homotetramer. It depends on Mg(2+) as a cofactor.

Its subcellular location is the cytoplasm. It catalyses the reaction alpha-D-xylose = alpha-D-xylulofuranose. The polypeptide is Xylose isomerase (Geobacillus kaustophilus (strain HTA426)).